Reading from the N-terminus, the 443-residue chain is MSEMTPREIVSELDGYIVGQHNAKRAVAIALRNRWRRMQLDEALRHEVTPKNILMIGPTGVGKTEIARRLAKLANAPFIKVEATKFTEVGYVGKEVDSIIRDLTDAAVKMVRLQSIEQNRFRAEELAEERVLDVLIPPAKNNWGQPEESGEPSSARQNFRKKLREGQLDEKEIEINLAAAPMGVEIMAPPGMEEMTNQLQSMFKNLAGQKQKPRKIKIKEAMKLLVEEEAAKLVNPEELKEKAIEAVEQHGIVFIDEIDKICKRDEVSGLDVSREGVQRDLLPLVEGCTVSTKHGMVKTDHILFIASGAFQVSSPSDLIPELQGRLPIRVELEALTTEDFERILTEPSASLTTQYIALMATEGVSITFTEDGIKRIAEAAWQVNECTENIGARRLHTVLERLMEDISYDASEWNGKTISIDADYVHGHLDELVSDEDLSRFIL.

ATP is bound by residues V18 and 60 to 65 (GVGKTE). A disordered region spans residues 139 to 160 (AKNNWGQPEESGEPSSARQNFR). The ATP site is built by D256, E321, and R393.

Belongs to the ClpX chaperone family. HslU subfamily. As to quaternary structure, a double ring-shaped homohexamer of HslV is capped on each side by a ring-shaped HslU homohexamer. The assembly of the HslU/HslV complex is dependent on binding of ATP.

Its subcellular location is the cytoplasm. Functionally, ATPase subunit of a proteasome-like degradation complex; this subunit has chaperone activity. The binding of ATP and its subsequent hydrolysis by HslU are essential for unfolding of protein substrates subsequently hydrolyzed by HslV. HslU recognizes the N-terminal part of its protein substrates and unfolds these before they are guided to HslV for hydrolysis. This Sodalis glossinidius (strain morsitans) protein is ATP-dependent protease ATPase subunit HslU.